The following is a 122-amino-acid chain: Large ribosomal subunit protein uL14 (122 aa).

This sequence belongs to the universal ribosomal protein uL14 family. As to quaternary structure, part of the 50S ribosomal subunit. Forms a cluster with proteins L3 and L19. In the 70S ribosome, L14 and L19 interact and together make contacts with the 16S rRNA in bridges B5 and B8.

Binds to 23S rRNA. Forms part of two intersubunit bridges in the 70S ribosome. The polypeptide is Large ribosomal subunit protein uL14 (Francisella philomiragia subsp. philomiragia (strain ATCC 25017 / CCUG 19701 / FSC 153 / O#319-036)).